A 38-amino-acid chain; its full sequence is Photosystem II reaction center protein L (38 aa).

A helical transmembrane segment spans residues 17-37; that stretch reads SLFWGLLLIFVLAILFSNYFF.

It belongs to the PsbL family. PSII is composed of 1 copy each of membrane proteins PsbA, PsbB, PsbC, PsbD, PsbE, PsbF, PsbH, PsbI, PsbJ, PsbK, PsbL, PsbM, PsbT, PsbX, PsbY, PsbZ, Psb30/Ycf12, at least 3 peripheral proteins of the oxygen-evolving complex and a large number of cofactors. It forms dimeric complexes.

It is found in the plastid. The protein localises to the chloroplast thylakoid membrane. One of the components of the core complex of photosystem II (PSII). PSII is a light-driven water:plastoquinone oxidoreductase that uses light energy to abstract electrons from H(2)O, generating O(2) and a proton gradient subsequently used for ATP formation. It consists of a core antenna complex that captures photons, and an electron transfer chain that converts photonic excitation into a charge separation. This subunit is found at the monomer-monomer interface and is required for correct PSII assembly and/or dimerization. This Chara vulgaris (Common stonewort) protein is Photosystem II reaction center protein L.